The sequence spans 42 residues: Beta-defensin 6 (42 aa).

Pyrrolidone carboxylic acid is present on Gln1. 3 disulfide bridges follow: Cys9–Cys38, Cys16–Cys31, and Cys21–Cys39.

This sequence belongs to the beta-defensin family. As to expression, neutrophilic granules.

The protein localises to the secreted. In terms of biological role, has bactericidal activity. Active against E.coli ML35 and S.aureus 502A. The polypeptide is Beta-defensin 6 (DEFB6) (Bos taurus (Bovine)).